We begin with the raw amino-acid sequence, 603 residues long: Aspartate--tRNA(Asp/Asn) ligase (603 aa).

The tract at residues 205–208 is aspartate; the sequence is QLFK. Residue arginine 227 coordinates L-aspartate. Residues 227 to 229 and glutamine 236 contribute to the ATP site; that span reads RDE. Histidine 463 is a binding site for L-aspartate. Residue glutamate 497 coordinates ATP. L-aspartate is bound at residue arginine 504. 549 to 552 lines the ATP pocket; the sequence is GMDR.

This sequence belongs to the class-II aminoacyl-tRNA synthetase family. Type 1 subfamily. In terms of assembly, homodimer.

Its subcellular location is the cytoplasm. It catalyses the reaction tRNA(Asx) + L-aspartate + ATP = L-aspartyl-tRNA(Asx) + AMP + diphosphate. Aspartyl-tRNA synthetase with relaxed tRNA specificity since it is able to aspartylate not only its cognate tRNA(Asp) but also tRNA(Asn). Reaction proceeds in two steps: L-aspartate is first activated by ATP to form Asp-AMP and then transferred to the acceptor end of tRNA(Asp/Asn). This chain is Aspartate--tRNA(Asp/Asn) ligase, found in Anaeromyxobacter dehalogenans (strain 2CP-1 / ATCC BAA-258).